Consider the following 494-residue polypeptide: Aldehyde dehydrogenase family 7 member A1 (494 aa).

Gly247 to Gly252 contributes to the NAD(+) binding site. Glu269 functions as the Proton acceptor in the catalytic mechanism. The active-site Nucleophile is Cys303.

It belongs to the aldehyde dehydrogenase family. In terms of assembly, homotetramer.

The enzyme catalyses an aldehyde + NAD(+) + H2O = a carboxylate + NADH + 2 H(+). In Brassica napus (Rape), this protein is Aldehyde dehydrogenase family 7 member A1 (BTG-26).